We begin with the raw amino-acid sequence, 534 residues long: Zinc finger protein 69 homolog B (534 aa).

Glycyl lysine isopeptide (Lys-Gly) (interchain with G-Cter in SUMO2) cross-links involve residues Lys37 and Lys40. In terms of domain architecture, KRAB spans 74–145 (LTFKDVSVDF…ERDISGVPSS (72 aa)). Residues Lys178 and Lys235 each participate in a glycyl lysine isopeptide (Lys-Gly) (interchain with G-Cter in SUMO2) cross-link. C2H2-type zinc fingers lie at residues 279–301 (FECN…MRIH), 307–329 (FRCK…QRIH), 335–357 (YECK…VRIH), 363–385 (YECR…LRTH), 391–413 (FTCK…EIIH), 419–441 (YICN…QRTH), 447–469 (YKCK…QRVH), 475–497 (YECS…QRIH), and 503–525 (YDCN…CKTH).

The protein belongs to the krueppel C2H2-type zinc-finger protein family.

It is found in the nucleus. In terms of biological role, may be involved in transcriptional regulation. Essential for Golgi structural integrity. This is Zinc finger protein 69 homolog B (ZFP69B) from Homo sapiens (Human).